Consider the following 326-residue polypeptide: Transcription cofactor vestigial-like protein 3 (326 aa).

Residues 57-80 (VTLPSKQEEEDEEEEEEEKDQPAE) are disordered. Lys-62 is covalently cross-linked (Glycyl lysine isopeptide (Lys-Gly) (interchain with G-Cter in SUMO2)). Residues 64–75 (EEEDEEEEEEEK) show a composition bias toward acidic residues. A Glycyl lysine isopeptide (Lys-Gly) (interchain with G-Cter in SUMO2) cross-link involves residue Lys-126. Disordered regions lie at residues 175–203 (PPGTFSAADPSPWPGHNLHQTGPAPPPAV) and 233–256 (HAHMHHRHRHHHHHHHPPAGSALD). Over residues 233–249 (HAHMHHRHRHHHHHHHP) the composition is skewed to basic residues.

It belongs to the vestigial family. Enriched in placenta.

The protein localises to the nucleus. Its function is as follows. May act as a specific coactivator for the mammalian TEFs. The sequence is that of Transcription cofactor vestigial-like protein 3 (VGLL3) from Homo sapiens (Human).